Here is a 65-residue protein sequence, read N- to C-terminus: Large ribosomal subunit protein bL35 (65 aa).

A disordered region spans residues 1–26; the sequence is MPKIKTLRSAAKRFKKTESGKFKRKQ.

This sequence belongs to the bacterial ribosomal protein bL35 family.

The protein is Large ribosomal subunit protein bL35 of Buchnera aphidicola subsp. Baizongia pistaciae (strain Bp).